A 139-amino-acid polypeptide reads, in one-letter code: Non-structural protein 1 (139 aa).

The DLNP; interaction with MAP1B signature appears at 136–139 (DLNP).

The protein belongs to the pneumovirus non-structural protein 1 family. As to quaternary structure, monomer. Homomultimer. Heteromultimer with NS2. Interacts with the matrix protein M. Interacts with host ELOC and CUL2; this interaction allows NS1 to form an active E3 ligase with ELOC and CUL2. Interacts with host IRF3; this interaction leads to the disrupted association of IRF3 with CREBBP and thus reduced binding of IRF3 to the IFN-beta promoter. Interacts with host MAVS; this interaction prevents MAVS binding to RIGI and inhibits signaling pathway leading to interferon production. Interacts with host MAP1B/microtubule-associated protein 1B. Interacts with host TRIM25 (via SPRY domain); this interaction suppresses RIGI ubiquitination and results in decreased interaction between RIGI and MAVS.

It is found in the host cytoplasm. Its subcellular location is the host mitochondrion. The protein resides in the host nucleus. Its function is as follows. Plays a major role in antagonizing the type I IFN-mediated antiviral response by degrading or inhibiting multiple cellular factors required for either IFN induction or response pathways. Acts cooperatively with NS2 to repress activation and nuclear translocation of host IFN-regulatory factor IRF3. Also disrupts the association of IRF3 with CREBBP. Interacts with host mitochondrial-associated membrane (MAM) MAVS and prevents the interaction with RIGI. Interacts with TRIM25 to suppress TRIM25-mediated RIGI ubiquitination and thereby RIGI-MAVS interaction. Together with NS2, participates in the proteasomal degradation of host STAT2, IRF3, IRF7, TBK1 and RIGI through a NS-degradasome involving CUL2 and Elongin-C. The degradasome requires an intact mitochondrial MAVS. Decreases the levels of host TRAF3 and IKBKE/IKK-epsilon. As functions other than disruptions of the type I IFN-mediated antiviral signaling pathways, induces host SOCS1 and SOCS3 expression. Suppresses premature apoptosis by an NF-kappa-B-dependent, interferon-independent mechanism and thus facilitates virus growth. Additionally, NS1 may serve some inhibitory role in viral transcription and RNA replication. Suppresses proliferation and activation of host CD103+ CD8+ cytotoxic T-lymphocytes and Th17 helper T-lymphocytes. The sequence is that of Non-structural protein 1 (1C) from Homo sapiens (Human).